Reading from the N-terminus, the 622-residue chain is Chromosomal replication initiator protein DnaA (622 aa).

Residues 1–99 are domain I, interacts with DnaA modulators; sequence MADVPADLAA…SAGEPPAPPA (99 aa). Positions 88–282 are disordered; the sequence is DDSAGEPPAP…APGPGEPHAR (195 aa). Residues 100–281 are domain II; that stretch reads PPMHQSHQGP…PAPGPGEPHA (182 aa). 2 stretches are compositionally biased toward basic and acidic residues: residues 118 to 137 and 176 to 210; these read QRDD…RPSD and GYQD…EPWR. The span at 250–262 shows a compositional bias: gly residues; it reads PGGHGPGRTGGSV. Residues 282 to 498 form a domain III, AAA+ region region; sequence RLNPKYLFDT…GALIRVTAFA (217 aa). Residues G326, G328, K329, and T330 each contribute to the ATP site. The segment at 499 to 622 is domain IV, binds dsDNA; that stretch reads SLNRQPVDLG…TELTNRIKNG (124 aa).

This sequence belongs to the DnaA family. In terms of assembly, oligomerizes as a right-handed, spiral filament on DNA at oriC.

It is found in the cytoplasm. Plays an essential role in the initiation and regulation of chromosomal replication. ATP-DnaA binds to the origin of replication (oriC) to initiate formation of the DNA replication initiation complex once per cell cycle. Binds the DnaA box (a 9 base pair repeat at the origin) and separates the double-stranded (ds)DNA. Forms a right-handed helical filament on oriC DNA; dsDNA binds to the exterior of the filament while single-stranded (ss)DNA is stabiized in the filament's interior. The ATP-DnaA-oriC complex binds and stabilizes one strand of the AT-rich DNA unwinding element (DUE), permitting loading of DNA polymerase. After initiation quickly degrades to an ADP-DnaA complex that is not apt for DNA replication. Binds acidic phospholipids. In Streptomyces griseus subsp. griseus (strain JCM 4626 / CBS 651.72 / NBRC 13350 / KCC S-0626 / ISP 5235), this protein is Chromosomal replication initiator protein DnaA.